The following is a 284-amino-acid chain: Bifunctional protein FolD (284 aa).

Residues 166 to 168 (GAS) and Ile-232 contribute to the NADP(+) site.

This sequence belongs to the tetrahydrofolate dehydrogenase/cyclohydrolase family. In terms of assembly, homodimer.

It catalyses the reaction (6R)-5,10-methylene-5,6,7,8-tetrahydrofolate + NADP(+) = (6R)-5,10-methenyltetrahydrofolate + NADPH. It carries out the reaction (6R)-5,10-methenyltetrahydrofolate + H2O = (6R)-10-formyltetrahydrofolate + H(+). Its pathway is one-carbon metabolism; tetrahydrofolate interconversion. In terms of biological role, catalyzes the oxidation of 5,10-methylenetetrahydrofolate to 5,10-methenyltetrahydrofolate and then the hydrolysis of 5,10-methenyltetrahydrofolate to 10-formyltetrahydrofolate. The sequence is that of Bifunctional protein FolD from Azotobacter vinelandii (strain DJ / ATCC BAA-1303).